The chain runs to 582 residues: Formate--tetrahydrofolate ligase (582 aa).

Thr-65–Thr-72 is a binding site for ATP.

Belongs to the formate--tetrahydrofolate ligase family.

It catalyses the reaction (6S)-5,6,7,8-tetrahydrofolate + formate + ATP = (6R)-10-formyltetrahydrofolate + ADP + phosphate. It functions in the pathway one-carbon metabolism; tetrahydrofolate interconversion. This chain is Formate--tetrahydrofolate ligase, found in Vibrio parahaemolyticus serotype O3:K6 (strain RIMD 2210633).